Here is a 321-residue protein sequence, read N- to C-terminus: Annexin A5 (321 aa).

Alanine 2 carries the post-translational modification N-acetylalanine. Annexin repeat units follow at residues phenylalanine 15–lysine 86, proline 87–glutamine 158, alanine 170–lysine 242, and serine 246–glycine 317. Lysine 29 participates in a covalent cross-link: Glycyl lysine isopeptide (Lys-Gly) (interchain with G-Cter in SUMO1); alternate. Lysine 29 is covalently cross-linked (Glycyl lysine isopeptide (Lys-Gly) (interchain with G-Cter in SUMO2); alternate). An N6-acetyllysine mark is found at lysine 70, lysine 76, lysine 79, lysine 97, and lysine 101. Residue lysine 290 is modified to N6-succinyllysine. The [IL]-x-C-x-x-[DE] motif signature appears at leucine 314–aspartate 320.

It belongs to the annexin family. Monomer. Binds ATRX and EIF5B. In terms of processing, S-nitrosylation is induced by interferon-gamma and oxidatively-modified low-densitity lipoprotein (LDL(ox)) possibly implicating the iNOS-S100A8/9 transnitrosylase complex.

Functionally, this protein is an anticoagulant protein that acts as an indirect inhibitor of the thromboplastin-specific complex, which is involved in the blood coagulation cascade. The sequence is that of Annexin A5 (ANXA5) from Bos taurus (Bovine).